The primary structure comprises 292 residues: Lipoyl synthase (292 aa).

Positions 38, 43, 49, 64, 68, 71, and 277 each coordinate [4Fe-4S] cluster. One can recognise a Radical SAM core domain in the interval 50-266 (WSKGTATFML…KNRAESLGFR (217 aa)).

This sequence belongs to the radical SAM superfamily. Lipoyl synthase family. It depends on [4Fe-4S] cluster as a cofactor.

It localises to the cytoplasm. It catalyses the reaction [[Fe-S] cluster scaffold protein carrying a second [4Fe-4S](2+) cluster] + N(6)-octanoyl-L-lysyl-[protein] + 2 oxidized [2Fe-2S]-[ferredoxin] + 2 S-adenosyl-L-methionine + 4 H(+) = [[Fe-S] cluster scaffold protein] + N(6)-[(R)-dihydrolipoyl]-L-lysyl-[protein] + 4 Fe(3+) + 2 hydrogen sulfide + 2 5'-deoxyadenosine + 2 L-methionine + 2 reduced [2Fe-2S]-[ferredoxin]. Its pathway is protein modification; protein lipoylation via endogenous pathway; protein N(6)-(lipoyl)lysine from octanoyl-[acyl-carrier-protein]: step 2/2. Catalyzes the radical-mediated insertion of two sulfur atoms into the C-6 and C-8 positions of the octanoyl moiety bound to the lipoyl domains of lipoate-dependent enzymes, thereby converting the octanoylated domains into lipoylated derivatives. This is Lipoyl synthase from Chlorobium limicola (strain DSM 245 / NBRC 103803 / 6330).